The primary structure comprises 339 residues: Heat-inducible transcription repressor HrcA (339 aa).

The protein belongs to the HrcA family.

Negative regulator of class I heat shock genes (grpE-dnaK-dnaJ and groELS operons). Prevents heat-shock induction of these operons. The protein is Heat-inducible transcription repressor HrcA of Parafrankia sp. (strain EAN1pec).